The chain runs to 259 residues: Type III pantothenate kinase (259 aa).

6-13 contributes to the ATP binding site; it reads DTGNTNTV. 107–110 lines the substrate pocket; that stretch reads GPDR. Aspartate 109 acts as the Proton acceptor in catalysis. K(+) is bound at residue aspartate 129. Threonine 132 lines the ATP pocket. Position 184 (threonine 184) interacts with substrate.

It belongs to the type III pantothenate kinase family. Homodimer. NH4(+) serves as cofactor. The cofactor is K(+).

The protein localises to the cytoplasm. The catalysed reaction is (R)-pantothenate + ATP = (R)-4'-phosphopantothenate + ADP + H(+). Its pathway is cofactor biosynthesis; coenzyme A biosynthesis; CoA from (R)-pantothenate: step 1/5. Functionally, catalyzes the phosphorylation of pantothenate (Pan), the first step in CoA biosynthesis. This chain is Type III pantothenate kinase, found in Paracoccus denitrificans (strain Pd 1222).